We begin with the raw amino-acid sequence, 763 residues long: Amine oxidase [copper-containing] 3 (763 aa).

At 2–6 (TQKTT) the chain is on the cytoplasmic side. A helical; Signal-anchor for type II membrane protein membrane pass occupies residues 7-27 (LVLLALAVITIFALVCVLLAG). Residues 28–763 (RSGDGGRLSQ…AFSHGGFTYK (736 aa)) lie on the Extracellular side of the membrane. N137 is a glycosylation site (N-linked (GlcNAc...) asparagine). C198 and C199 are joined by a disulfide. 2 N-linked (GlcNAc...) asparagine glycosylation sites follow: N232 and N294. D386 functions as the Proton acceptor in the catalytic mechanism. A disulfide bond links C404 and C430. The active-site Schiff-base intermediate with substrate; via topaquinone is Y471. Residue Y471 is modified to 2',4',5'-topaquinone. Residues H520 and H522 each coordinate Cu(2+). The Ca(2+) site is built by D529, L530, D531, and E572. 2 N-linked (GlcNAc...) asparagine glycosylation sites follow: N581 and N592. Residues E641 and F663 each coordinate Ca(2+). N666 is a glycosylation site (N-linked (GlcNAc...) asparagine). Ca(2+) is bound by residues E667, D673, and L674. Cu(2+) is bound at residue H684. C734 and C741 form a disulfide bridge.

This sequence belongs to the copper/topaquinone oxidase family. In terms of assembly, homodimer; disulfide-linked. Probably forms heterodimers with AOC2. Cu(2+) serves as cofactor. It depends on Ca(2+) as a cofactor. L-topaquinone is required as a cofactor. Topaquinone (TPQ) is generated by copper-dependent autoxidation of a specific tyrosyl residue. Post-translationally, N- and O-glycosylated. As to expression, highly expressed in adipocytes, aorta and lung. Expressed at lower levels in heart, kidney, large intestine, liver, small intestine and stomach.

Its subcellular location is the cell membrane. It catalyses the reaction methylamine + O2 + H2O = formaldehyde + H2O2 + NH4(+). The enzyme catalyses benzylamine + O2 + H2O = benzaldehyde + H2O2 + NH4(+). The catalysed reaction is 2-phenylethylamine + O2 + H2O = 2-phenylacetaldehyde + H2O2 + NH4(+). Its function is as follows. Catalyzes the oxidative deamination of primary amines to the corresponding aldehydes with the concomitant production of hydrogen peroxide and ammonia. Has a preference for the primary monoamines methylamine and benzylamine. Could also act on 2-phenylethylamine but much less efficiently. At endothelial cells surface can also function as a cell adhesion protein that participates in lymphocyte extravasation and recirculation by mediating the binding of lymphocytes to peripheral lymph node vascular endothelial cells in an L-selectin-independent fashion. In Rattus norvegicus (Rat), this protein is Amine oxidase [copper-containing] 3.